Consider the following 122-residue polypeptide: Large ribosomal subunit protein uL24 (122 aa).

This sequence belongs to the universal ribosomal protein uL24 family. As to quaternary structure, part of the 50S ribosomal subunit.

Functionally, one of two assembly initiator proteins, it binds directly to the 5'-end of the 23S rRNA, where it nucleates assembly of the 50S subunit. Located at the polypeptide exit tunnel on the outside of the subunit. In Pyrobaculum arsenaticum (strain DSM 13514 / JCM 11321 / PZ6), this protein is Large ribosomal subunit protein uL24.